Here is a 143-residue protein sequence, read N- to C-terminus: Type II secretion system core protein G (143 aa).

Residues 1 to 8 (MQKRRQSG) constitute a propeptide, leader sequence. At phenylalanine 9 the chain carries N-methylphenylalanine. A helical transmembrane segment spans residues 9 to 29 (FTLLEVMVVIVILGILASLVV). Residues 70–92 (QGLDALVNKPTAAPEPRSYRDGG) are disordered.

It belongs to the GSP G family. As to quaternary structure, type II secretion system is composed of four main components: the outer membrane complex, the inner membrane complex, the cytoplasmic secretion ATPase and the periplasm-spanning pseudopilus. Forms homomultimers. Cleaved by the prepilin peptidase. Post-translationally, methylated by prepilin peptidase at the amino group of the N-terminal phenylalanine once the leader sequence is cleaved.

It localises to the cell inner membrane. Its function is as follows. Core component of the type II secretion system required for the energy-dependent secretion of extracellular factors such as proteases and toxins from the periplasm. Pseudopilin (pilin-like) protein that polymerizes to form the pseudopilus. Further polymerization triggers pseudopilus growth. This chain is Type II secretion system core protein G (exeG), found in Aeromonas hydrophila.